Consider the following 366-residue polypeptide: Growth hormone secretagogue receptor type 1 (366 aa).

Topologically, residues 1-40 (MWNATPSEEPGSNLTRAELGWDAPPGNDSLADELLQLFPA) are extracellular. N-linked (GlcNAc...) asparagine glycosylation is found at Asn13 and Asn27. Residues 41–66 (PLLAGVTATCVALFVVGIAGNLLTML) traverse the membrane as a helical segment. Residues 67–72 (VVSRFR) are Cytoplasmic-facing. The helical transmembrane segment at 73 to 96 (ELRTTTNLYLSSMAFSDLLIFLCM) threads the bilayer. The Extracellular portion of the chain corresponds to 97–117 (PLDLVRLWQYRPWNFGDLLCK). Cys116 and Cys198 form a disulfide bridge. The chain crosses the membrane as a helical span at residues 118 to 139 (LFQFVSESCTYATVLTITALSV). At 140–162 (ERYFAICFPLRAKVVVTKGRVKL) the chain is on the cytoplasmic side. Residues 163–183 (VILVIWALAFCSAGPIFVLVG) traverse the membrane as a helical segment. Residues 184–211 (VEHENGTDPQDTNECRATEFAVRSGLLT) are Extracellular-facing. Asn188 is a glycosylation site (N-linked (GlcNAc...) asparagine). Residues 212 to 235 (IMVWVSSVFFFLPVFCLTVLYSLI) form a helical membrane-spanning segment. The Cytoplasmic portion of the chain corresponds to 236–263 (GRKLWRRKRGDGAVGSSLRDQNHRQTVK). The chain crosses the membrane as a helical span at residues 264-285 (MLAVVVFAFILCWLPFHVGRYL). The Extracellular segment spans residues 286–302 (FSKSFEPGSLEIAQISQ). The chain crosses the membrane as a helical span at residues 303-326 (YCNLVSFVLFYLSAAINPILYNIM). At 327–366 (SKKYRVAVFKLLGFEPFSQRKLSTLKDESSRAWTKSSINT) the chain is on the cytoplasmic side.

This sequence belongs to the G-protein coupled receptor 1 family.

It is found in the cell membrane. Functionally, receptor for ghrelin, coupled to G-alpha-11 proteins. Stimulates growth hormone secretion. Also binds other growth hormone releasing peptides (GHRP) (e.g. Met-enkephalin and GHRP-6) as well as non-peptide, low molecular weight secretagogues (e.g. L-692,429, MK-0677, adenosine). In Oryctolagus cuniculus (Rabbit), this protein is Growth hormone secretagogue receptor type 1 (GHSR).